Here is a 656-residue protein sequence, read N- to C-terminus: Squalene-hopene cyclase (656 aa).

The PFTB 1 repeat unit spans residues 68–110 (EQKIANYLRRCQSREHWGWPVYYGGEFNISASVQAYFALKMTG). The active-site Proton donor is Asp-396. 4 PFTB repeats span residues 417–459 (LDRA…ALLD), 485–525 (IERG…NASG), 533–582 (VLKC…GLMA), and 591–634 (VKRG…QFFP).

This sequence belongs to the terpene cyclase/mutase family.

The enzyme catalyses squalene = hop-22(29)-ene. The catalysed reaction is squalene + H2O = hopan-22-ol. In terms of biological role, squalene cyclase that catalyzes the oxygen-independent cyclization of squalene into hopanoids, a class of cyclic triterpenoids including hop-22(29)-ene, hop-17(21)-ene, hop-21(22)-ene, and hopan-22-ol. The polypeptide is Squalene-hopene cyclase (Schizosaccharomyces japonicus (strain yFS275 / FY16936) (Fission yeast)).